We begin with the raw amino-acid sequence, 92 residues long: Small ribosomal subunit protein uS19 (92 aa).

Belongs to the universal ribosomal protein uS19 family.

Functionally, protein S19 forms a complex with S13 that binds strongly to the 16S ribosomal RNA. The sequence is that of Small ribosomal subunit protein uS19 from Neisseria gonorrhoeae (strain ATCC 700825 / FA 1090).